The sequence spans 620 residues: bZIP transcription factor 49 (620 aa).

At 1–287 (MAEPVLEDTY…VAKVKKFKKV (287 aa)) the chain is on the cytoplasmic side. Over residues 109 to 135 (SSCYNRESPTDSDFSGTSQSLSFSGQD) the composition is skewed to polar residues. The interval 109–155 (SSCYNRESPTDSDFSGTSQSLSFSGQDSAKRKTEIEEDSSDESRRLG) is disordered. Residues 172–235 (EKKKNVRLVR…VTLRQQMGTR (64 aa)) enclose the bZIP domain. A basic motif region spans residues 173 to 205 (KKKNVRLVRNRESAHLSRQRKKHYVEELEDKVK). Residues 211–218 (ISELSSKM) form a leucine-zipper region. A helical membrane pass occupies residues 288–308 (ASFSVFGFLFCMFLFGALVNI). Over 309–620 (SYGEYKSNYV…RPDVPHLMTS (312 aa)) the chain is Lumenal. Disordered regions lie at residues 343-364 (DSDQ…PRNS), 398-460 (ARDS…SNDQ), and 505-557 (PASP…RETK). N351 and N363 each carry an N-linked (GlcNAc...) asparagine glycan. Over residues 352-364 (VSETENLGPPRNS) the composition is skewed to polar residues. Composition is skewed to basic and acidic residues over residues 398–409 (ARDSETKNEEGK) and 432–441 (RTRDVSKHLY). Polar residues-rich tracts occupy residues 447–460 (GLSS…SNDQ) and 508–519 (PHTQQCKNTSDT). N515 carries an N-linked (GlcNAc...) asparagine glycan. An RRIL cleavage motif motif is present at residues 526–529 (RRIL). N-linked (GlcNAc...) asparagine glycosylation is found at N539 and N546. The segment covering 540-557 (LTKEDHNSSSKDKFRETK) has biased composition (basic and acidic residues).

Belongs to the bZIP family. As to quaternary structure, interacts with BZIP28.

It is found in the endoplasmic reticulum membrane. Its subcellular location is the nucleus. Transcriptional activator involved in stress responses. The polypeptide is bZIP transcription factor 49 (Arabidopsis thaliana (Mouse-ear cress)).